Reading from the N-terminus, the 425-residue chain is MTEYNGYVTDETIEGADDGPLAGKTVAVKDNISTEGVRTTCGSAMLEDYVPPYDATVVERLKDAGATIPGKTNMDEFGMGTTTETSAFGAVENPAAEGRVPGGSSGGSAAVVAAGDADLALGSDTGGSIRCPAAFCGVVGIKPTYGLVSRYGLIAYANSLEQIGPIAPSVEGAAELLDVIAGPDEHDATTQEAPEADGSYAAAADGDVDGLSIGVPTELLDGADEAVVETFWDAMDDLEAQGASYHEVDLPSVEHAVEAYYVIAMSEASSNLARFDGVRYGQSGGYDGNWNESFANAREQGFGEEVKRRILLGTYALSAGYHDKYYKKAQDARAWVKQDFDEALDDADVLASPTMPVPPMKRGESLDDPLTMYLADANTTPVNLANLPAISVPAGETDDGLPVGLQLVGPAFGERQIIRAGSALA.

Residues lysine 29 and serine 104 each act as charge relay system in the active site. The active-site Acyl-ester intermediate is the serine 128.

Belongs to the amidase family. GatA subfamily. Heterotrimer of A, B and C subunits.

The enzyme catalyses L-glutamyl-tRNA(Gln) + L-glutamine + ATP + H2O = L-glutaminyl-tRNA(Gln) + L-glutamate + ADP + phosphate + H(+). In terms of biological role, allows the formation of correctly charged Gln-tRNA(Gln) through the transamidation of misacylated Glu-tRNA(Gln) in organisms which lack glutaminyl-tRNA synthetase. The reaction takes place in the presence of glutamine and ATP through an activated gamma-phospho-Glu-tRNA(Gln). This Haloarcula marismortui (strain ATCC 43049 / DSM 3752 / JCM 8966 / VKM B-1809) (Halobacterium marismortui) protein is Glutamyl-tRNA(Gln) amidotransferase subunit A.